Reading from the N-terminus, the 569-residue chain is Methionine--tRNA ligase (569 aa).

The 'HIGH' region motif lies at 11-21; the sequence is PYINGVKHLGN. Cysteine 143, cysteine 146, cysteine 156, and cysteine 159 together coordinate Zn(2+). Residues 342–346 carry the 'KMSKS' region motif; that stretch reads KFSTS. Position 345 (threonine 345) interacts with ATP.

It belongs to the class-I aminoacyl-tRNA synthetase family. MetG type 1 subfamily. In terms of assembly, monomer. Requires Zn(2+) as cofactor.

Its subcellular location is the cytoplasm. It carries out the reaction tRNA(Met) + L-methionine + ATP = L-methionyl-tRNA(Met) + AMP + diphosphate. Functionally, is required not only for elongation of protein synthesis but also for the initiation of all mRNA translation through initiator tRNA(fMet) aminoacylation. The chain is Methionine--tRNA ligase from Caulobacter sp. (strain K31).